The following is a 625-amino-acid chain: Enolase 4 (625 aa).

The disordered stretch occupies residues 184-226 (YSTVPTPLPPVPPPPPPPPPTKKKGQKPGRKDTITEKPIAPAE). Residues 189-203 (TPLPPVPPPPPPPPP) show a composition bias toward pro residues. A substrate-binding site is contributed by Val300. The disordered stretch occupies residues 331–350 (PSPPKAETKKGHDGSKRGQQ). Residues 336–346 (AETKKGHDGSK) show a composition bias toward basic and acidic residues. The Proton acceptor role is filled by Asn497. Residue Gly548 coordinates substrate. A disordered region spans residues 604–625 (PLVPTFPTQGVEESAETGASSG).

Belongs to the enolase family. As to quaternary structure, interacts with ENO1 and AKAP4. In terms of processing, synthesized as an approximately 70-kDa precursor, which then undergoes proteolytic cleavage to an approximately 60-kDa enzyme; HOATZ associates directly or indirectly with ENO4 to mediate this process before its transport to mature flagella.

The enzyme catalyses (2R)-2-phosphoglycerate = phosphoenolpyruvate + H2O. Its pathway is carbohydrate degradation; glycolysis; pyruvate from D-glyceraldehyde 3-phosphate: step 4/5. Its function is as follows. May be required for sperm motility and function. In Homo sapiens (Human), this protein is Enolase 4.